Here is a 267-residue protein sequence, read N- to C-terminus: Alkaline ceramidase 3 (267 aa).

The Cytoplasmic portion of the chain corresponds to 1–33 (MAPAADREGYWGPTTSTLDWCEENYSVTWYIAE). Residues Asp19, Trp20, Glu22, Asn24, and Glu33 each contribute to the Ca(2+) site. Residues 34–55 (FWNTVSNLIMIIPPMFGAVQSV) traverse the membrane as a helical segment. Residues 56 to 61 (RDGLEK) lie on the Lumenal side of the membrane. Residues 62 to 82 (RYIASYLALTVVGMGSWCFHM) traverse the membrane as a helical segment. His81 is a binding site for Zn(2+). Topologically, residues 83 to 87 (TLKYE) are cytoplasmic. A helical transmembrane segment spans residues 88-108 (MQLLDELPMIYSCCIFVYCMF). The Lumenal portion of the chain corresponds to 109-118 (ECFKIKNSVN). A helical transmembrane segment spans residues 119-139 (YHLLFTLVLFSLIVTTVYLKV). Residues 140–141 (KE) are Cytoplasmic-facing. The chain crosses the membrane as a helical span at residues 142–162 (PIFHQVMYGMLVFTLVLRSIY). Residues 163 to 173 (IVTWVYPWLRG) lie on the Lumenal side of the membrane. Residues 174–194 (LGYTSLGIFLLGFLFWNIDNI) traverse the membrane as a helical segment. At 195–215 (FCESLRNFRKKVPPIIGITTQ) the chain is on the cytoplasmic side. The chain crosses the membrane as a helical span at residues 216-236 (FHAWWHILTGLGSYLHILFSL). The Zn(2+) site is built by His217 and His221. Residues 237 to 267 (YTRTLYLRYRPKVKFLFGIWPVILFEPLRKH) are Lumenal-facing.

Belongs to the alkaline ceramidase family. Zn(2+) serves as cofactor. Ubiquitously expressed. Highly expressed in placenta. Expressed in erythrocytes.

Its subcellular location is the endoplasmic reticulum membrane. It localises to the golgi apparatus membrane. The enzyme catalyses an N-acyl-(4R)-4-hydroxysphinganine + H2O = (4R)-hydroxysphinganine + a fatty acid. It catalyses the reaction N-(5Z,8Z,11Z,14Z-eicosatetraenoyl)-sphing-4-enine + H2O = sphing-4-enine + (5Z,8Z,11Z,14Z)-eicosatetraenoate. The catalysed reaction is N-(5Z,8Z,11Z,14Z-eicosatetraenoyl)-sphinganine + H2O = sphinganine + (5Z,8Z,11Z,14Z)-eicosatetraenoate. It carries out the reaction N-(5Z,8Z,11Z,14Z-eicosatetraenoyl)-(4R)-hydroxysphinganine + H2O = (4R)-hydroxysphinganine + (5Z,8Z,11Z,14Z)-eicosatetraenoate. The enzyme catalyses N-(11Z-eicosenoyl)-sphing-4-enine + H2O = (11Z)-eicosenoate + sphing-4-enine. It catalyses the reaction N-(11Z-eicosenoyl)-sphinganine + H2O = (11Z)-eicosenoate + sphinganine. The catalysed reaction is N-(11Z-eicosenoyl)-(4R)-hydroxysphinganine + H2O = (11Z)-eicosenoate + (4R)-hydroxysphinganine. It carries out the reaction N-(9Z-octadecenoyl)-sphing-4-enine + H2O = sphing-4-enine + (9Z)-octadecenoate. The enzyme catalyses N-(9Z-octadecenoyl)-sphinganine + H2O = sphinganine + (9Z)-octadecenoate. It catalyses the reaction N-(9Z-octadecenoyl)-(4R)-hydroxysphinganine + H2O = (4R)-hydroxysphinganine + (9Z)-octadecenoate. The catalysed reaction is an N-acylsphing-4-enine + H2O = sphing-4-enine + a fatty acid. It carries out the reaction an N-acylsphinganine + H2O = sphinganine + a fatty acid. Its pathway is lipid metabolism; sphingolipid metabolism. Activated by 5 mM Ca(2+) and inhibited by 5 mM Zn(2+). Its function is as follows. Endoplasmic reticulum and Golgi ceramidase that catalyzes the hydrolysis of unsaturated long-chain C18:1-, C20:1- and C20:4-ceramides, dihydroceramides and phytoceramides into sphingoid bases like sphingosine and free fatty acids at alkaline pH. Ceramides, sphingosine, and its phosphorylated form sphingosine-1-phosphate are bioactive lipids that mediate cellular signaling pathways regulating several biological processes including cell proliferation, apoptosis and differentiation. Controls the generation of sphingosine in erythrocytes, and thereby sphingosine-1-phosphate in plasma. Through the regulation of ceramides and sphingosine-1-phosphate homeostasis in the brain may play a role in neurons survival and function. By regulating the levels of pro-inflammatory ceramides in immune cells and tissues, may modulate the inflammatory response. This chain is Alkaline ceramidase 3 (ACER3), found in Homo sapiens (Human).